We begin with the raw amino-acid sequence, 623 residues long: DEAD-box ATP-dependent RNA helicase 52C (623 aa).

Residues 1–120 (MATPSRTSWA…DGDAAAGAGD (120 aa)) are disordered. A compositionally biased stretch (low complexity) spans 10 to 29 (ADVADADPAPAPAPAANGPA). Over residues 54–69 (APPPSSSSSSAPPPRA) the composition is skewed to pro residues. Residues 70–83 (APGLLAPRPAAAGM) show a composition bias toward low complexity. Positions 84 to 97 (GRMGGGGGGGGFGG) are enriched in gly residues. Residues 155 to 183 (GTFAEIDLGQALNDNIRRCKYVRPTPVQR) carry the Q motif motif. One can recognise a Helicase ATP-binding domain in the interval 186–372 (IPISLAGRDL…SDFLENYIFL (187 aa)). 199–206 (AQTGSGKT) contacts ATP. A DEAD box motif is present at residues 316–319 (DEAD). The region spanning 399-550 (HLMDLLHAQR…EVPAWLSRYA (152 aa)) is the Helicase C-terminal domain. Residues 553 to 595 (PSYGGGGGRNRRSGGGSRFGGRDFRRDSSSGRGGGDYYGGGSS) form a disordered region. A compositionally biased stretch (gly residues) spans 555–571 (YGGGGGRNRRSGGGSRF). The span at 572–581 (GGRDFRRDSS) shows a compositional bias: basic and acidic residues. Over residues 583–595 (GRGGGDYYGGGSS) the composition is skewed to gly residues.

Belongs to the DEAD box helicase family. DDX3/DED1 subfamily.

The enzyme catalyses ATP + H2O = ADP + phosphate + H(+). The chain is DEAD-box ATP-dependent RNA helicase 52C from Oryza sativa subsp. japonica (Rice).